The primary structure comprises 458 residues: Argininosuccinate lyase (458 aa).

This sequence belongs to the lyase 1 family. Argininosuccinate lyase subfamily.

It is found in the cytoplasm. It catalyses the reaction 2-(N(omega)-L-arginino)succinate = fumarate + L-arginine. Its pathway is amino-acid biosynthesis; L-arginine biosynthesis; L-arginine from L-ornithine and carbamoyl phosphate: step 3/3. The polypeptide is Argininosuccinate lyase (Citrifermentans bemidjiense (strain ATCC BAA-1014 / DSM 16622 / JCM 12645 / Bem) (Geobacter bemidjiensis)).